A 285-amino-acid polypeptide reads, in one-letter code: MTTLTHRTRRTEVSKSCEKKIESEEDTNQERSPDNEDPGDSKDIRLTLMEEVLLLGLKDKEGYTSFWNDCISSGLRGGILIELAMRGRIYLEPPTMRKKRLLDRKVLLKSDSPTGDVLLDETLKHIKATEPTETVQTWIELLTGETWNPFKLQYQLRNVRERIAKNLVEKGILTTEKQNFLLFDMTTHPVTNTTEKQRLMKKLQDSVLERWVNDPQRMDRRTLALLVLAHSSDVLENVFSCLTDDKYDVAMNRTKDLVELDPEVEGTKHNATEMIWAVLAAFNKS.

Residues 1-43 (MTTLTHRTRRTEVSKSCEKKIESEEDTNQERSPDNEDPGDSKD) form a disordered region. Residues 10–43 (RTEVSKSCEKKIESEEDTNQERSPDNEDPGDSKD) are compositionally biased toward basic and acidic residues. A 1,2-diacyl-sn-glycero-3-phospho-(1D-myo-inositol 4-phosphate)-binding residues include Trp67 and Arg76. Ser112 bears the Phosphoserine mark. Arg157 and Arg160 together coordinate a 1,2-diacyl-sn-glycero-3-phospho-(1D-myo-inositol 4-phosphate). Positions 176–187 (EKQNFLLFDMTT) are beta-hairpin required for oligomerization.

Belongs to the GOLPH3/VPS74 family. Homooligomer. Does not interact MYO18; differs from GOLPH3 by its inability to interact with MYO18. May interact with ARF1.

It localises to the golgi apparatus. Its subcellular location is the golgi stack membrane. The protein localises to the trans-Golgi network membrane. In terms of biological role, phosphatidylinositol-4-phosphate-binding protein that may antagonize the action of GOLPH3 which is required for the process of vesicle budding at the Golgi and anterograde transport to the plasma membrane. The protein is Golgi phosphoprotein 3-like (Golph3l) of Rattus norvegicus (Rat).